Here is a 345-residue protein sequence, read N- to C-terminus: Phosphoribosylformylglycinamidine cyclo-ligase (345 aa).

Belongs to the AIR synthase family.

Its subcellular location is the cytoplasm. The catalysed reaction is 2-formamido-N(1)-(5-O-phospho-beta-D-ribosyl)acetamidine + ATP = 5-amino-1-(5-phospho-beta-D-ribosyl)imidazole + ADP + phosphate + H(+). It functions in the pathway purine metabolism; IMP biosynthesis via de novo pathway; 5-amino-1-(5-phospho-D-ribosyl)imidazole from N(2)-formyl-N(1)-(5-phospho-D-ribosyl)glycinamide: step 2/2. This is Phosphoribosylformylglycinamidine cyclo-ligase from Histophilus somni (strain 129Pt) (Haemophilus somnus).